The following is a 1038-amino-acid chain: Probable LRR receptor-like serine/threonine-protein kinase At1g53430 (1038 aa).

An N-terminal signal peptide occupies residues 1–28 (MGFIFSTEKVVYVLLLIFVCLENFGSNA). The Extracellular segment spans residues 29–609 (QLLPEDEVQT…VDTGKPLSNG (581 aa)). Asn48, Asn77, Asn85, Asn112, and Asn127 each carry an N-linked (GlcNAc...) asparagine glycan. LRR repeat units lie at residues 113-137 (LTRLREIDLSRNFLNGTIPTTLSQI), 139-160 (LEILSVIGNRLSGPFPPQLGDI), 161-184 (TTLTDVNLETNLFTGPLPRNLGNL), 185-208 (RSLKELLLSANNFTGQIPESLSNL), 210-234 (NLTEFRIDGNSLSGKIPDFIGNWTL), and 236-256 (ERLDLQGTSMEGPIPPSISNL). Residues Asn196, Asn210, Asn231, Asn255, and Asn258 are each glycosylated (N-linked (GlcNAc...) asparagine). LRR repeat units follow at residues 259–281 (LTELRITDLRGQAAFSFPDLRNL), 282–305 (MKMKRLVLRNCLIRGPIPEYIGSM), 306–328 (SELKTLDLSSNMLTGVIPDTFRN), 330–351 (DAFNFMFLNNNSLTGPVPQFII), and 352–374 (NSKENLDLSDNNFTQPPTLSCNQ). Residues Asn339, Asn363, Asn471, and Asn561 are each glycosylated (N-linked (GlcNAc...) asparagine). The helical transmembrane segment at 610-630 (AVAGIVIAACAVFGLLVLVIL) threads the bilayer. Residues 631–1038 (RLTGYLGGKE…LDDLTDVKIE (408 aa)) lie on the Cytoplasmic side of the membrane. Thr658 is modified (phosphothreonine). The Protein kinase domain maps to 669–950 (FDPENKIGEG…EGKIKVQPPL (282 aa)). Residues 675-683 (IGEGGFGPV) and Lys697 contribute to the ATP site. Tyr742 carries the phosphotyrosine modification. Asp795 functions as the Proton acceptor in the catalytic mechanism. Ser828 carries the post-translational modification Phosphoserine. 2 positions are modified to phosphothreonine: Thr829 and Thr834. Tyr842 carries the post-translational modification Phosphotyrosine. The segment at 984 to 1038 (RNREQDISSSSMDGPWVDSSFSEPGKDVSLQQQEEGRSSSSSRKLLDDLTDVKIE) is disordered. A compositionally biased stretch (basic and acidic residues) spans 1027-1038 (KLLDDLTDVKIE).

The protein belongs to the protein kinase superfamily. Ser/Thr protein kinase family.

The protein localises to the membrane. It catalyses the reaction L-seryl-[protein] + ATP = O-phospho-L-seryl-[protein] + ADP + H(+). It carries out the reaction L-threonyl-[protein] + ATP = O-phospho-L-threonyl-[protein] + ADP + H(+). In Arabidopsis thaliana (Mouse-ear cress), this protein is Probable LRR receptor-like serine/threonine-protein kinase At1g53430.